The primary structure comprises 218 residues: Claudin-5 (218 aa).

Topologically, residues 1–7 (MGSAALE) are cytoplasmic. A helical membrane pass occupies residues 8–28 (ILGLVLCLVGWGGLILACGLP). Over 29–81 (MWQVTAFLDHNIVTAQTTWKGLWMSCVVQSTGHMQCKVYDSVLALSTEVQAAR) the chain is Extracellular. A helical transmembrane segment spans residues 82–102 (ALTVSAVLLAFVALFVTLAGA). Over 103–122 (QCTTCVAPGPAKARVALTGG) the chain is Cytoplasmic. Residues 123-143 (VLYLFCGLLALVPLCWFANIV) form a helical membrane-spanning segment. The Extracellular segment spans residues 144 to 159 (VREFYDPSVPVSQKYE). Residues 160–180 (LGAALYIGWAATALLMVGGCL) form a helical membrane-spanning segment. At 181–218 (LCCGAWVCTGRPDLSFPVKYSAPRRPTATGDYDKKNYV) the chain is on the cytoplasmic side. The segment at 217–218 (YV) is interactions with TJP1, TJP2 and TJP3.

This sequence belongs to the claudin family. In terms of assembly, directly interacts with TJP1/ZO-1, TJP2/ZO-2 and TJP3/ZO-3. Interacts with MPDZ.

The protein resides in the cell junction. Its subcellular location is the tight junction. It localises to the cell membrane. Its function is as follows. Plays a major role in tight junction-specific obliteration of the intercellular space. The protein is Claudin-5 (CLDN5) of Homo sapiens (Human).